The primary structure comprises 94 residues: Non-specific lipid-transfer protein 1 (94 aa).

4 disulfide bridges follow: C4-C53, C14-C30, C31-C76, and C51-C90.

In terms of biological role, plant non-specific lipid-transfer proteins transfer phospholipids as well as galactolipids across membranes. May play a role in wax or cutin deposition in the cell walls of expanding epidermal cells and certain secretory tissues. The sequence is that of Non-specific lipid-transfer protein 1 from Amaranthus hypochondriacus (Prince-of-Wales feather).